A 96-amino-acid chain; its full sequence is Small ribosomal subunit protein bS6 (96 aa).

It belongs to the bacterial ribosomal protein bS6 family.

Its function is as follows. Binds together with bS18 to 16S ribosomal RNA. In Carboxydothermus hydrogenoformans (strain ATCC BAA-161 / DSM 6008 / Z-2901), this protein is Small ribosomal subunit protein bS6.